Reading from the N-terminus, the 144-residue chain is Large ribosomal subunit protein uL15 (144 aa).

A disordered region spans residues methionine 1–glutamate 51. The span at arginine 21–glycine 31 shows a compositional bias: gly residues. Positions glycine 32 to arginine 47 are enriched in basic residues.

It belongs to the universal ribosomal protein uL15 family. Part of the 50S ribosomal subunit.

Functionally, binds to the 23S rRNA. This Actinobacillus succinogenes (strain ATCC 55618 / DSM 22257 / CCUG 43843 / 130Z) protein is Large ribosomal subunit protein uL15.